The following is a 368-amino-acid chain: tRNA/tmRNA (uracil-C(5))-methyltransferase (368 aa).

Positions 192, 220, 225, 241, and 301 each coordinate S-adenosyl-L-methionine. Cysteine 326 serves as the catalytic Nucleophile. Glutamate 360 acts as the Proton acceptor in catalysis.

Belongs to the class I-like SAM-binding methyltransferase superfamily. RNA M5U methyltransferase family. TrmA subfamily.

The catalysed reaction is uridine(54) in tRNA + S-adenosyl-L-methionine = 5-methyluridine(54) in tRNA + S-adenosyl-L-homocysteine + H(+). It carries out the reaction uridine(341) in tmRNA + S-adenosyl-L-methionine = 5-methyluridine(341) in tmRNA + S-adenosyl-L-homocysteine + H(+). Its function is as follows. Dual-specificity methyltransferase that catalyzes the formation of 5-methyluridine at position 54 (m5U54) in all tRNAs, and that of position 341 (m5U341) in tmRNA (transfer-mRNA). The sequence is that of tRNA/tmRNA (uracil-C(5))-methyltransferase from Actinobacillus pleuropneumoniae serotype 5b (strain L20).